The sequence spans 989 residues: Phosphoenolpyruvate carboxylase (989 aa).

Residues histidine 175 and lysine 630 contribute to the active site.

It belongs to the PEPCase type 1 family. It depends on Mg(2+) as a cofactor.

It catalyses the reaction oxaloacetate + phosphate = phosphoenolpyruvate + hydrogencarbonate. Forms oxaloacetate, a four-carbon dicarboxylic acid source for the tricarboxylic acid cycle. The chain is Phosphoenolpyruvate carboxylase from Prochlorococcus marinus (strain MIT 9301).